Here is a 524-residue protein sequence, read N- to C-terminus: Bifunctional purine biosynthesis protein PurH (524 aa).

In terms of domain architecture, MGS-like spans 1-145 (MIKQALLSVS…KNHRDVTVIV (145 aa)).

It belongs to the PurH family.

It catalyses the reaction (6R)-10-formyltetrahydrofolate + 5-amino-1-(5-phospho-beta-D-ribosyl)imidazole-4-carboxamide = 5-formamido-1-(5-phospho-D-ribosyl)imidazole-4-carboxamide + (6S)-5,6,7,8-tetrahydrofolate. The enzyme catalyses IMP + H2O = 5-formamido-1-(5-phospho-D-ribosyl)imidazole-4-carboxamide. The protein operates within purine metabolism; IMP biosynthesis via de novo pathway; 5-formamido-1-(5-phospho-D-ribosyl)imidazole-4-carboxamide from 5-amino-1-(5-phospho-D-ribosyl)imidazole-4-carboxamide (10-formyl THF route): step 1/1. It participates in purine metabolism; IMP biosynthesis via de novo pathway; IMP from 5-formamido-1-(5-phospho-D-ribosyl)imidazole-4-carboxamide: step 1/1. The chain is Bifunctional purine biosynthesis protein PurH from Cupriavidus necator (strain ATCC 17699 / DSM 428 / KCTC 22496 / NCIMB 10442 / H16 / Stanier 337) (Ralstonia eutropha).